The chain runs to 271 residues: Cell division protein FtsQ (271 aa).

Positions 1–37 are disordered; sequence MAAGPTTAEKSGASGAKRSSKGSSDGPSRPGTRNRKF. Residues 1-43 lie on the Cytoplasmic side of the membrane; the sequence is MAAGPTTAEKSGASGAKRSSKGSSDGPSRPGTRNRKFRMPGTR. Residues 8 to 24 show a composition bias toward low complexity; sequence AEKSGASGAKRSSKGSS. Residues 44-64 traverse the membrane as a helical segment; that stretch reads ALLITLGVLLLVAGGLWALYG. The Extracellular segment spans residues 65 to 271; sequence STWFRVERVK…APTAPASSGS (207 aa). The 70-residue stretch at 68–137 folds into the POTRA domain; it reads FRVERVKTSG…HGIGLKVTER (70 aa).

It belongs to the FtsQ/DivIB family. FtsQ subfamily.

The protein localises to the cell membrane. Its function is as follows. Essential cell division protein. This chain is Cell division protein FtsQ, found in Streptomyces venezuelae (strain ATCC 10712 / CBS 650.69 / DSM 40230 / JCM 4526 / NBRC 13096 / PD 04745).